We begin with the raw amino-acid sequence, 98 residues long: NADH-ubiquinone oxidoreductase chain 4L (98 aa).

Transmembrane regions (helical) follow at residues 1–21 (MTLV…GLLM), 29–49 (SLLC…VTIL), and 61–81 (IILL…LVMV).

The protein belongs to the complex I subunit 4L family. In terms of assembly, core subunit of respiratory chain NADH dehydrogenase (Complex I) which is composed of 45 different subunits.

The protein localises to the mitochondrion inner membrane. The catalysed reaction is a ubiquinone + NADH + 5 H(+)(in) = a ubiquinol + NAD(+) + 4 H(+)(out). Core subunit of the mitochondrial membrane respiratory chain NADH dehydrogenase (Complex I) which catalyzes electron transfer from NADH through the respiratory chain, using ubiquinone as an electron acceptor. Part of the enzyme membrane arm which is embedded in the lipid bilayer and involved in proton translocation. This Rousettus aegyptiacus (Egyptian fruit bat) protein is NADH-ubiquinone oxidoreductase chain 4L (MT-ND4L).